Here is a 163-residue protein sequence, read N- to C-terminus: Nucleotide-binding protein Mmcs_0777 (163 aa).

This sequence belongs to the YajQ family.

In terms of biological role, nucleotide-binding protein. The protein is Nucleotide-binding protein Mmcs_0777 of Mycobacterium sp. (strain MCS).